We begin with the raw amino-acid sequence, 114 residues long: FK506-binding protein 1 (114 aa).

Positions 26 to 114 (GDLVTIHYTG…IFDVELLKVN (89 aa)) constitute a PPIase FKBP-type domain.

It belongs to the FKBP-type PPIase family. FKBP1 subfamily.

It localises to the cytoplasm. The catalysed reaction is [protein]-peptidylproline (omega=180) = [protein]-peptidylproline (omega=0). Inhibited by both FK506 and rapamycin. Its function is as follows. PPIases accelerate the folding of proteins. It catalyzes the cis-trans isomerization of proline imidic peptide bonds in oligopeptides. The polypeptide is FK506-binding protein 1 (FPR1) (Candida glabrata (strain ATCC 2001 / BCRC 20586 / JCM 3761 / NBRC 0622 / NRRL Y-65 / CBS 138) (Yeast)).